We begin with the raw amino-acid sequence, 103 residues long: Histone H4.2 (103 aa).

Positions 1 to 14 (MSGRGKGGKGLGKG) are enriched in gly residues. The tract at residues 1–20 (MSGRGKGGKGLGKGGAKRHR) is disordered. Residue lysine 6 is modified to N6-acetyl-N6-methyllysine; alternate. N6-methyllysine; alternate occurs at positions 6, 9, and 13. N6-acetyl-N6-methyllysine; alternate is present on lysine 13. A DNA-binding region spans residues 17–21 (KRHRK). Lysine 92 is subject to N6-glutaryllysine.

The protein belongs to the histone H4 family. In terms of assembly, the nucleosome is a histone octamer containing two molecules each of H2A, H2B, H3 and H4 assembled in one H3-H4 heterotetramer and two H2A-H2B heterodimers. The octamer wraps approximately 147 bp of DNA. Post-translationally, glutarylation at Lys-92 (H4K91glu) destabilizes nucleosomes by promoting dissociation of the H2A-H2B dimers from nucleosomes.

The protein resides in the nucleus. It localises to the chromosome. In terms of biological role, core component of nucleosome. Nucleosomes wrap and compact DNA into chromatin, limiting DNA accessibility to the cellular machineries which require DNA as a template. Histones thereby play a central role in transcription regulation, DNA repair, DNA replication and chromosomal stability. DNA accessibility is regulated via a complex set of post-translational modifications of histones, also called histone code, and nucleosome remodeling. The sequence is that of Histone H4.2 (hhfB) from Emericella nidulans (strain FGSC A4 / ATCC 38163 / CBS 112.46 / NRRL 194 / M139) (Aspergillus nidulans).